Here is an 843-residue protein sequence, read N- to C-terminus: Pentatricopeptide repeat-containing protein At4g21880, mitochondrial (843 aa).

PPR repeat units lie at residues S392 to I426, S427 to P461, N462 to P496, N497 to P531, D532 to E562, N564 to P594, and H598 to V632.

This sequence belongs to the PPR family. P subfamily.

Its subcellular location is the mitochondrion. The protein is Pentatricopeptide repeat-containing protein At4g21880, mitochondrial of Arabidopsis thaliana (Mouse-ear cress).